A 142-amino-acid chain; its full sequence is Large ribosomal subunit protein uL11 (142 aa).

This sequence belongs to the universal ribosomal protein uL11 family. Part of the ribosomal stalk of the 50S ribosomal subunit. Interacts with L10 and the large rRNA to form the base of the stalk. L10 forms an elongated spine to which L12 dimers bind in a sequential fashion forming a multimeric L10(L12)X complex. Post-translationally, one or more lysine residues are methylated.

In terms of biological role, forms part of the ribosomal stalk which helps the ribosome interact with GTP-bound translation factors. The sequence is that of Large ribosomal subunit protein uL11 from Buchnera aphidicola subsp. Schizaphis graminum (strain Sg).